Reading from the N-terminus, the 451-residue chain is Phosphoglucosamine mutase (451 aa).

The active-site Phosphoserine intermediate is Ser101. Residues Ser101, Asp241, Asp243, and Asp245 each coordinate Mg(2+). Ser101 bears the Phosphoserine mark.

It belongs to the phosphohexose mutase family. Mg(2+) serves as cofactor. In terms of processing, activated by phosphorylation.

The enzyme catalyses alpha-D-glucosamine 1-phosphate = D-glucosamine 6-phosphate. Functionally, catalyzes the conversion of glucosamine-6-phosphate to glucosamine-1-phosphate. The sequence is that of Phosphoglucosamine mutase from Exiguobacterium sibiricum (strain DSM 17290 / CCUG 55495 / CIP 109462 / JCM 13490 / 255-15).